The sequence spans 329 residues: Ankyrin repeat and SOCS box protein 5 (329 aa).

ANK repeat units follow at residues 69 to 98 (ADRS…NVNA), 102 to 131 (DHIT…NVNA), 135 to 164 (DGVT…KAQL), 167 to 196 (CLPS…DVDQ), 200 to 229 (HLGT…DVQK), and 232 to 261 (YWDT…DINA). The SOCS box domain occupies 278–329 (MVERILLQHEATPSSLCQLCRLCIRNYIGRPRLHLIPQLQLPTLLQNFLQYR).

This sequence belongs to the ankyrin SOCS box (ASB) family. As to expression, expressed in endothelial and smooth muscle cells of collateral arteries as well as in satellite cells.

Its pathway is protein modification; protein ubiquitination. In terms of biological role, may be a substrate-recognition component of a SCF-like ECS (Elongin-Cullin-SOCS-box protein) E3 ubiquitin-protein ligase complex which mediates the ubiquitination and subsequent proteasomal degradation of target proteins. May play a role in the initiation of arteriogenesis. This is Ankyrin repeat and SOCS box protein 5 (ASB5) from Oryctolagus cuniculus (Rabbit).